Consider the following 768-residue polypeptide: ATP-dependent zinc metalloprotease FtsH (768 aa).

Residues 1 to 33 (MADRDKNDIRKRLEELRKDNNRRNNRQDNGNRS) are Cytoplasmic-facing. A helical transmembrane segment spans residues 34–54 (PFSGFLFFIFVILLFTFTLLF). Residues 55–139 (HRDIQTYFQE…KLNSLQPSGG (85 aa)) lie on the Periplasmic side of the membrane. Residues 140 to 160 (GFFLLLLGQFLPMIIMIGLMV) form a helical membrane-spanning segment. Over 161–768 (YLAKKMVGGS…SNFKLPSFME (608 aa)) the chain is Cytoplasmic. 238-245 (GRPGTGKT) lines the ATP pocket. Position 461 (His-461) interacts with Zn(2+). Glu-462 is a catalytic residue. Zn(2+) contacts are provided by His-465 and Asp-536. The disordered stretch occupies residues 647–768 (EESIQKGSEG…SNFKLPSFME (122 aa)). Positions 669-698 (QENKTVEAEVHDSNLKSDTEKLAEAVREIT) are enriched in basic and acidic residues. Residues 715–731 (KDSDDNEKNDDDNENSD) show a composition bias toward acidic residues.

The protein in the central section; belongs to the AAA ATPase family. It in the C-terminal section; belongs to the peptidase M41 family. As to quaternary structure, homohexamer. Zn(2+) serves as cofactor.

Its subcellular location is the cell inner membrane. In terms of biological role, acts as a processive, ATP-dependent zinc metallopeptidase for both cytoplasmic and membrane proteins. Plays a role in the quality control of integral membrane proteins. The sequence is that of ATP-dependent zinc metalloprotease FtsH from Leptotrichia buccalis (strain ATCC 14201 / DSM 1135 / JCM 12969 / NCTC 10249 / C-1013-b).